Here is a 271-residue protein sequence, read N- to C-terminus: Formamidopyrimidine-DNA glycosylase (271 aa).

The active-site Schiff-base intermediate with DNA is the P2. E3 serves as the catalytic Proton donor. Catalysis depends on K56, which acts as the Proton donor; for beta-elimination activity. Residues H89, R107, and K151 each contribute to the DNA site. An FPG-type zinc finger spans residues 236 to 270 (NVYGRAGLQCRQCGTPVRLSRQGQRSTYFCPHCQR). R260 serves as the catalytic Proton donor; for delta-elimination activity.

Belongs to the FPG family. As to quaternary structure, monomer. Zn(2+) serves as cofactor.

The catalysed reaction is Hydrolysis of DNA containing ring-opened 7-methylguanine residues, releasing 2,6-diamino-4-hydroxy-5-(N-methyl)formamidopyrimidine.. It catalyses the reaction 2'-deoxyribonucleotide-(2'-deoxyribose 5'-phosphate)-2'-deoxyribonucleotide-DNA = a 3'-end 2'-deoxyribonucleotide-(2,3-dehydro-2,3-deoxyribose 5'-phosphate)-DNA + a 5'-end 5'-phospho-2'-deoxyribonucleoside-DNA + H(+). In terms of biological role, involved in base excision repair of DNA damaged by oxidation or by mutagenic agents. Acts as a DNA glycosylase that recognizes and removes damaged bases. Has a preference for oxidized purines, such as 7,8-dihydro-8-oxoguanine (8-oxoG). Has AP (apurinic/apyrimidinic) lyase activity and introduces nicks in the DNA strand. Cleaves the DNA backbone by beta-delta elimination to generate a single-strand break at the site of the removed base with both 3'- and 5'-phosphates. This Acidovorax ebreus (strain TPSY) (Diaphorobacter sp. (strain TPSY)) protein is Formamidopyrimidine-DNA glycosylase.